We begin with the raw amino-acid sequence, 372 residues long: Glutamate 5-kinase (372 aa).

Residue Lys-14 participates in ATP binding. Ser-55, Asp-142, and Asn-154 together coordinate substrate. Residues Ser-174 to Asp-175 and Thr-216 to Lys-222 each bind ATP. Residues Gln-279–Lys-357 enclose the PUA domain.

Belongs to the glutamate 5-kinase family.

It is found in the cytoplasm. It carries out the reaction L-glutamate + ATP = L-glutamyl 5-phosphate + ADP. It participates in amino-acid biosynthesis; L-proline biosynthesis; L-glutamate 5-semialdehyde from L-glutamate: step 1/2. In terms of biological role, catalyzes the transfer of a phosphate group to glutamate to form L-glutamate 5-phosphate. The polypeptide is Glutamate 5-kinase (Carboxydothermus hydrogenoformans (strain ATCC BAA-161 / DSM 6008 / Z-2901)).